The chain runs to 75 residues: MPKYYEEKEEEKHPCGGVKEDLKNCLLQSDCVLQEGKSPKECLKEGYCKALQVTFFECKRSILDNRARFRGRKGY.

In terms of domain architecture, CHCH spans Q28–R66. The Cx10C motif motif lies at C31–C42. 2 disulfide bridges follow: C31-C58 and C42-C48. Positions C48–C58 match the Cx9C motif motif.

The protein belongs to the PET191 family.

Involved in an early step of the mitochondrial complex IV assembly process. This is Cytochrome c oxidase assembly factor 5 (coa5) from Xenopus laevis (African clawed frog).